The chain runs to 32 residues: ilv operon leader peptide (32 aa).

The sequence is that of ilv operon leader peptide (ilvL) from Edwardsiella tarda.